Reading from the N-terminus, the 321-residue chain is CRISPR system ring nuclease SSO1393 (321 aa).

The protein belongs to the cOA ring nuclease family. As to quaternary structure, homodimer. Does not require a metal cofactor. serves as cofactor.

It is found in the cytoplasm. The enzyme catalyses cyclic tetraadenylate = 2 5'-hydroxy-diadenylate 2',3'-cylic phosphate. Functionally, CRISPR (clustered regularly interspaced short palindromic repeat) is an adaptive immune system that provides protection against mobile genetic elements (viruses, transposable elements and conjugative plasmids). CRISPR clusters contain spacers, sequences complementary to antecedent mobile elements, and target invading nucleic acids. CRISPR clusters are transcribed and processed into CRISPR RNA (crRNA). A nuclease that degrades cyclic oligoadenylates (cOA), second messengers that induce an antiviral state important for defense against invading nucleic acids. Destruction of cOA deactivates the Csx1 ribonuclease, preventing uncontrolled degradation of cellular RNA. Slowly degrades cA4 (a tetraadenylate ring) into first a linear tetraadenylate product and secondly into a linear diadenylate product with 5'-OH and 2',3'-cyclic phosphate termini. Is 10-fold less active than SSO2081, suggesting it plays a minor role in cA4 degradation. There may be 2 active sites per homodimer. This is CRISPR system ring nuclease SSO1393 from Saccharolobus solfataricus (strain ATCC 35092 / DSM 1617 / JCM 11322 / P2) (Sulfolobus solfataricus).